The following is a 430-amino-acid chain: Enolase (430 aa).

Residue Q167 participates in (2R)-2-phosphoglycerate binding. E209 (proton donor) is an active-site residue. Positions 246, 287, and 314 each coordinate Mg(2+). Residues K339, R368, and S369 each contribute to the (2R)-2-phosphoglycerate site. The active-site Proton acceptor is the K339.

It belongs to the enolase family. Requires Mg(2+) as cofactor.

Its subcellular location is the cytoplasm. It is found in the secreted. The protein resides in the cell surface. The catalysed reaction is (2R)-2-phosphoglycerate = phosphoenolpyruvate + H2O. Its pathway is carbohydrate degradation; glycolysis; pyruvate from D-glyceraldehyde 3-phosphate: step 4/5. In terms of biological role, catalyzes the reversible conversion of 2-phosphoglycerate (2-PG) into phosphoenolpyruvate (PEP). It is essential for the degradation of carbohydrates via glycolysis. The polypeptide is Enolase (Synechococcus sp. (strain ATCC 27144 / PCC 6301 / SAUG 1402/1) (Anacystis nidulans)).